Here is a 286-residue protein sequence, read N- to C-terminus: MTVIDEIYSSSSAIPTVALNDEAKMPVLGLGVAKLSDEETESSVLAALEAGCRLIDTAASYGNEAAVGRAIAASGIPREELFVTTKLGTSRQGFHSAQESCKESLDRLGLDYLDLYLIHWPAPKLGKYVESFEGMIEARERGHVRSIGVSNFTEDLLATVIEETDEVPAVNQVELHPRLNQAELRQVHAQHDVTTQSYSPLGVGRLIEEPTVTTIAAEYGRTPAQVLVRWNLQLDNVVVSRSSKPERVAENLDVFDFTLEPEHMEAIEGLHDGTRVLHDPMTFMGT.

Tyrosine 61 functions as the Proton donor in the catalytic mechanism. NADPH-binding residues include leucine 201, valine 203, valine 239, arginine 241, serine 242, arginine 247, and asparagine 251.

It belongs to the aldo/keto reductase family.

The protein is Aldo-keto reductase MAV_4483 of Mycobacterium avium (strain 104).